The sequence spans 512 residues: Photosystem II CP47 reaction center protein (512 aa).

6 helical membrane-spanning segments follow: residues 21–36 (AVHL…WAGS), 101–115 (IVLS…IWHW), 140–156 (GIHL…FGAF), 203–218 (IAAG…FHLS), 237–252 (VLSS…AFVV), and 457–472 (TFAL…HGAR).

Belongs to the PsbB/PsbC family. PsbB subfamily. In terms of assembly, PSII is composed of 1 copy each of membrane proteins PsbA, PsbB, PsbC, PsbD, PsbE, PsbF, PsbH, PsbI, PsbJ, PsbK, PsbL, PsbM, PsbT, PsbX, PsbY, PsbZ, Psb30/Ycf12, at least 3 peripheral proteins of the oxygen-evolving complex and a large number of cofactors. It forms dimeric complexes. The cofactor is Binds multiple chlorophylls. PSII binds additional chlorophylls, carotenoids and specific lipids..

The protein resides in the plastid. The protein localises to the chloroplast thylakoid membrane. Its function is as follows. One of the components of the core complex of photosystem II (PSII). It binds chlorophyll and helps catalyze the primary light-induced photochemical processes of PSII. PSII is a light-driven water:plastoquinone oxidoreductase, using light energy to abstract electrons from H(2)O, generating O(2) and a proton gradient subsequently used for ATP formation. This is Photosystem II CP47 reaction center protein from Physcomitrium patens (Spreading-leaved earth moss).